The primary structure comprises 381 residues: L-lactate dehydrogenase (381 aa).

Positions 1-380 constitute an FMN hydroxy acid dehydrogenase domain; sequence MIISASTDYR…TRDSLVRELG (380 aa). Residue Tyr24 participates in substrate binding. Positions 106 and 127 each coordinate FMN. Tyr129 provides a ligand contact to substrate. Thr155 is an FMN binding site. Substrate is bound at residue Arg164. Position 251 (Lys251) interacts with FMN. His275 (proton acceptor) is an active-site residue. Arg278 is a substrate binding site. 306–330 serves as a coordination point for FMN; the sequence is DSGIRSGLDVVRMIALGADTVLIGR.

It belongs to the FMN-dependent alpha-hydroxy acid dehydrogenase family. Homotetramer. The cofactor is FMN.

The protein resides in the cell inner membrane. It carries out the reaction (S)-lactate + A = pyruvate + AH2. In terms of biological role, catalyzes the conversion of L-lactate to pyruvate. Is coupled to the respiratory chain. This chain is L-lactate dehydrogenase, found in Pseudomonas entomophila (strain L48).